Consider the following 365-residue polypeptide: Holliday junction branch migration complex subunit RuvB (365 aa).

The segment at 1–191 (MNFDPIDDFD…FGFTAHMDFY (191 aa)) is large ATPase domain (RuvB-L). ATP-binding positions include leucine 30, arginine 31, glycine 72, lysine 75, threonine 76, serine 77, 138 to 140 (EDF), arginine 181, tyrosine 191, and arginine 228. A Mg(2+)-binding site is contributed by threonine 76. Positions 192-262 (EPEELQQILM…VAQAALAVYD (71 aa)) are small ATPAse domain (RuvB-S). The head domain (RuvB-H) stretch occupies residues 265–365 (QLGLDRLDRS…QATLFDPNGE (101 aa)). DNA-binding residues include arginine 320 and arginine 325.

The protein belongs to the RuvB family. In terms of assembly, homohexamer. Forms an RuvA(8)-RuvB(12)-Holliday junction (HJ) complex. HJ DNA is sandwiched between 2 RuvA tetramers; dsDNA enters through RuvA and exits via RuvB. An RuvB hexamer assembles on each DNA strand where it exits the tetramer. Each RuvB hexamer is contacted by two RuvA subunits (via domain III) on 2 adjacent RuvB subunits; this complex drives branch migration. In the full resolvosome a probable DNA-RuvA(4)-RuvB(12)-RuvC(2) complex forms which resolves the HJ.

Its subcellular location is the cytoplasm. The enzyme catalyses ATP + H2O = ADP + phosphate + H(+). The RuvA-RuvB-RuvC complex processes Holliday junction (HJ) DNA during genetic recombination and DNA repair, while the RuvA-RuvB complex plays an important role in the rescue of blocked DNA replication forks via replication fork reversal (RFR). RuvA specifically binds to HJ cruciform DNA, conferring on it an open structure. The RuvB hexamer acts as an ATP-dependent pump, pulling dsDNA into and through the RuvAB complex. RuvB forms 2 homohexamers on either side of HJ DNA bound by 1 or 2 RuvA tetramers; 4 subunits per hexamer contact DNA at a time. Coordinated motions by a converter formed by DNA-disengaged RuvB subunits stimulates ATP hydrolysis and nucleotide exchange. Immobilization of the converter enables RuvB to convert the ATP-contained energy into a lever motion, pulling 2 nucleotides of DNA out of the RuvA tetramer per ATP hydrolyzed, thus driving DNA branch migration. The RuvB motors rotate together with the DNA substrate, which together with the progressing nucleotide cycle form the mechanistic basis for DNA recombination by continuous HJ branch migration. Branch migration allows RuvC to scan DNA until it finds its consensus sequence, where it cleaves and resolves cruciform DNA. This is Holliday junction branch migration complex subunit RuvB from Rhodococcus erythropolis (strain PR4 / NBRC 100887).